A 556-amino-acid polypeptide reads, in one-letter code: Urocanate hydratase (556 aa).

Residues 52–53 (GG), glutamine 130, 176–178 (GMG), glutamate 196, arginine 201, 242–243 (NA), 263–267 (QTSAH), 273–274 (YL), and tyrosine 322 contribute to the NAD(+) site. Cysteine 410 is an active-site residue. Glycine 492 contacts NAD(+).

It belongs to the urocanase family. Requires NAD(+) as cofactor.

It localises to the cytoplasm. The enzyme catalyses 4-imidazolone-5-propanoate = trans-urocanate + H2O. It participates in amino-acid degradation; L-histidine degradation into L-glutamate; N-formimidoyl-L-glutamate from L-histidine: step 2/3. In terms of biological role, catalyzes the conversion of urocanate to 4-imidazolone-5-propionate. This Bradyrhizobium sp. (strain ORS 278) protein is Urocanate hydratase.